The following is a 352-amino-acid chain: Phospho-N-acetylmuramoyl-pentapeptide-transferase (352 aa).

Helical transmembrane passes span 16 to 36 (YITF…LLFM), 66 to 86 (TPTM…LLCA), 88 to 108 (LNNL…LIGL), 129 to 149 (MLYL…FGME), 160 to 180 (PLLS…VATS), 191 to 211 (GLAT…VYIA), 228 to 248 (SGEA…FLWF), 255 to 275 (LFMG…MAII), 280 to 300 (FLLF…ILQI), and 329 to 349 (KIIV…LLTL).

This sequence belongs to the glycosyltransferase 4 family. MraY subfamily. Mg(2+) is required as a cofactor.

The protein localises to the cell inner membrane. It catalyses the reaction UDP-N-acetyl-alpha-D-muramoyl-L-alanyl-gamma-D-glutamyl-meso-2,6-diaminopimeloyl-D-alanyl-D-alanine + di-trans,octa-cis-undecaprenyl phosphate = di-trans,octa-cis-undecaprenyl diphospho-N-acetyl-alpha-D-muramoyl-L-alanyl-D-glutamyl-meso-2,6-diaminopimeloyl-D-alanyl-D-alanine + UMP. The protein operates within cell wall biogenesis; peptidoglycan biosynthesis. In terms of biological role, catalyzes the initial step of the lipid cycle reactions in the biosynthesis of the cell wall peptidoglycan: transfers peptidoglycan precursor phospho-MurNAc-pentapeptide from UDP-MurNAc-pentapeptide onto the lipid carrier undecaprenyl phosphate, yielding undecaprenyl-pyrophosphoryl-MurNAc-pentapeptide, known as lipid I. The polypeptide is Phospho-N-acetylmuramoyl-pentapeptide-transferase (Wolinella succinogenes (strain ATCC 29543 / DSM 1740 / CCUG 13145 / JCM 31913 / LMG 7466 / NCTC 11488 / FDC 602W) (Vibrio succinogenes)).